We begin with the raw amino-acid sequence, 485 residues long: UDP-N-acetylmuramoyl-L-alanyl-D-glutamate--2,6-diaminopimelate ligase (485 aa).

A UDP-N-acetyl-alpha-D-muramoyl-L-alanyl-D-glutamate-binding site is contributed by serine 28. Position 108 to 114 (108 to 114 (GTNGKTS)) interacts with ATP. UDP-N-acetyl-alpha-D-muramoyl-L-alanyl-D-glutamate contacts are provided by residues asparagine 147, 148–149 (TT), serine 175, and arginine 183. Lysine 215 is subject to N6-carboxylysine. Residues arginine 374, 398–401 (DNPR), glycine 449, and glutamate 453 contribute to the meso-2,6-diaminopimelate site. The Meso-diaminopimelate recognition motif motif lies at 398–401 (DNPR).

Belongs to the MurCDEF family. MurE subfamily. Mg(2+) is required as a cofactor. In terms of processing, carboxylation is probably crucial for Mg(2+) binding and, consequently, for the gamma-phosphate positioning of ATP.

It is found in the cytoplasm. It catalyses the reaction UDP-N-acetyl-alpha-D-muramoyl-L-alanyl-D-glutamate + meso-2,6-diaminopimelate + ATP = UDP-N-acetyl-alpha-D-muramoyl-L-alanyl-gamma-D-glutamyl-meso-2,6-diaminopimelate + ADP + phosphate + H(+). Its pathway is cell wall biogenesis; peptidoglycan biosynthesis. Catalyzes the addition of meso-diaminopimelic acid to the nucleotide precursor UDP-N-acetylmuramoyl-L-alanyl-D-glutamate (UMAG) in the biosynthesis of bacterial cell-wall peptidoglycan. The protein is UDP-N-acetylmuramoyl-L-alanyl-D-glutamate--2,6-diaminopimelate ligase of Fusobacterium nucleatum subsp. nucleatum (strain ATCC 25586 / DSM 15643 / BCRC 10681 / CIP 101130 / JCM 8532 / KCTC 2640 / LMG 13131 / VPI 4355).